The sequence spans 64 residues: Putative H/ACA ribonucleoprotein complex subunit 3 (64 aa).

It belongs to the NOP10 family. As to quaternary structure, component of the small nucleolar ribonucleoprotein particles containing H/ACA-type snoRNAs (H/ACA snoRNPs).

It localises to the nucleus. It is found in the nucleolus. Its function is as follows. Required for ribosome biogenesis. Part of a complex which catalyzes pseudouridylation of rRNA. This involves the isomerization of uridine such that the ribose is subsequently attached to C5, instead of the normal N1. Pseudouridine ('psi') residues may serve to stabilize the conformation of rRNAs. The protein is Putative H/ACA ribonucleoprotein complex subunit 3 (nola-3) of Caenorhabditis elegans.